The chain runs to 380 residues: Cytochrome b (380 aa).

4 helical membrane-spanning segments follow: residues 33 to 53 (FGSL…FLAM), 77 to 98 (WLIR…FLHV), 113 to 133 (WNMG…GYVL), and 178 to 198 (FFAF…VHLL). Heme b is bound by residues histidine 83 and histidine 97. Histidine 182 and histidine 196 together coordinate heme b. Histidine 201 contributes to the a ubiquinone binding site. 4 helical membrane-spanning segments follow: residues 226–246 (IKDL…VLFF), 288–308 (LGGV…PLLH), 320–340 (ITQT…WIGG), and 347–367 (FIMI…IFMP).

This sequence belongs to the cytochrome b family. The cytochrome bc1 complex contains 11 subunits: 3 respiratory subunits (MT-CYB, CYC1 and UQCRFS1), 2 core proteins (UQCRC1 and UQCRC2) and 6 low-molecular weight proteins (UQCRH/QCR6, UQCRB/QCR7, UQCRQ/QCR8, UQCR10/QCR9, UQCR11/QCR10 and a cleavage product of UQCRFS1). This cytochrome bc1 complex then forms a dimer. It depends on heme b as a cofactor.

Its subcellular location is the mitochondrion inner membrane. In terms of biological role, component of the ubiquinol-cytochrome c reductase complex (complex III or cytochrome b-c1 complex) that is part of the mitochondrial respiratory chain. The b-c1 complex mediates electron transfer from ubiquinol to cytochrome c. Contributes to the generation of a proton gradient across the mitochondrial membrane that is then used for ATP synthesis. This Synaptomys borealis (Northern bog lemming) protein is Cytochrome b (MT-CYB).